The primary structure comprises 313 residues: Homoserine O-succinyltransferase (313 aa).

Cysteine 142 acts as the Acyl-thioester intermediate in catalysis. Residues lysine 163 and serine 192 each coordinate substrate. Catalysis depends on histidine 235, which acts as the Proton acceptor. The active site involves glutamate 237. Arginine 249 contacts substrate.

The protein belongs to the MetA family.

It is found in the cytoplasm. It carries out the reaction L-homoserine + succinyl-CoA = O-succinyl-L-homoserine + CoA. It participates in amino-acid biosynthesis; L-methionine biosynthesis via de novo pathway; O-succinyl-L-homoserine from L-homoserine: step 1/1. Its function is as follows. Transfers a succinyl group from succinyl-CoA to L-homoserine, forming succinyl-L-homoserine. In Vibrio campbellii (strain ATCC BAA-1116), this protein is Homoserine O-succinyltransferase.